The sequence spans 929 residues: Alanine--tRNA ligase (929 aa).

Positions 619, 623, 722, and 726 each coordinate Zn(2+).

It belongs to the class-II aminoacyl-tRNA synthetase family. It depends on Zn(2+) as a cofactor.

Its subcellular location is the cytoplasm. The catalysed reaction is tRNA(Ala) + L-alanine + ATP = L-alanyl-tRNA(Ala) + AMP + diphosphate. In terms of biological role, catalyzes the attachment of alanine to tRNA(Ala) in a two-step reaction: alanine is first activated by ATP to form Ala-AMP and then transferred to the acceptor end of tRNA(Ala). Also edits incorrectly charged Ser-tRNA(Ala) and Gly-tRNA(Ala) via its editing domain. The polypeptide is Alanine--tRNA ligase (Halobacterium salinarum (strain ATCC 29341 / DSM 671 / R1)).